Reading from the N-terminus, the 383-residue chain is tRNA(Met) cytidine acetate ligase (383 aa).

Residues 7–20 (IAEF…HEFL), Gly101, Asn153, and 178–179 (RI) contribute to the ATP site.

This sequence belongs to the TmcAL family.

Its subcellular location is the cytoplasm. It catalyses the reaction cytidine(34) in elongator tRNA(Met) + acetate + ATP = N(4)-acetylcytidine(34) in elongator tRNA(Met) + AMP + diphosphate. In terms of biological role, catalyzes the formation of N(4)-acetylcytidine (ac(4)C) at the wobble position of elongator tRNA(Met), using acetate and ATP as substrates. First activates an acetate ion to form acetyladenylate (Ac-AMP) and then transfers the acetyl group to tRNA to form ac(4)C34. The chain is tRNA(Met) cytidine acetate ligase from Lactobacillus acidophilus (strain ATCC 700396 / NCK56 / N2 / NCFM).